Consider the following 471-residue polypeptide: 4-aminobutyrate aminotransferase (471 aa).

Pyridoxal 5'-phosphate is bound at residue 135 to 136 (GA). Residue Arg192 coordinates substrate. Residue Lys326 is modified to N6-(pyridoxal phosphate)lysine. Thr351 is a binding site for pyridoxal 5'-phosphate.

Belongs to the class-III pyridoxal-phosphate-dependent aminotransferase family. As to quaternary structure, homodimer and homotetramer. It depends on pyridoxal 5'-phosphate as a cofactor.

It localises to the cytoplasm. It carries out the reaction 4-aminobutanoate + 2-oxoglutarate = succinate semialdehyde + L-glutamate. In terms of biological role, required for the degradation of gamma-aminobutyric acid (GABA), which is important for utilization of GABA as nitrogen source and for oxidative stress tolerance. Deaminates GABA to succinate semialdehyde, which in turn is converted to succinate by the succinate-semialdehyde dehydrogenase UGA2. Cannot transaminate beta-alanine (BAL). The protein is 4-aminobutyrate aminotransferase (UGA1) of Saccharomyces cerevisiae (strain ATCC 204508 / S288c) (Baker's yeast).